Consider the following 238-residue polypeptide: Ribonuclease PH (238 aa).

Residues arginine 86 and 124-126 (GTR) each bind phosphate.

Belongs to the RNase PH family. Homohexameric ring arranged as a trimer of dimers.

The catalysed reaction is tRNA(n+1) + phosphate = tRNA(n) + a ribonucleoside 5'-diphosphate. In terms of biological role, phosphorolytic 3'-5' exoribonuclease that plays an important role in tRNA 3'-end maturation. Removes nucleotide residues following the 3'-CCA terminus of tRNAs; can also add nucleotides to the ends of RNA molecules by using nucleoside diphosphates as substrates, but this may not be physiologically important. Probably plays a role in initiation of 16S rRNA degradation (leading to ribosome degradation) during starvation. The polypeptide is Ribonuclease PH (Mesorhizobium japonicum (strain LMG 29417 / CECT 9101 / MAFF 303099) (Mesorhizobium loti (strain MAFF 303099))).